We begin with the raw amino-acid sequence, 346 residues long: Uricase (346 aa).

The disordered stretch occupies residues Met-1–Gly-23. Catalysis depends on charge relay system residues Lys-39 and Thr-84. Thr-84, Asp-85, Phe-208, Arg-225, Val-273, Gln-274, and Asn-300 together coordinate urate. The active-site Charge relay system is His-302. The Microbody targeting signal motif lies at Ser-344–Leu-346.

Belongs to the uricase family. In terms of tissue distribution, malpighian tubules.

The protein localises to the peroxisome. The enzyme catalyses urate + O2 + H2O = 5-hydroxyisourate + H2O2. It functions in the pathway purine metabolism; urate degradation; (S)-allantoin from urate: step 1/3. Its activity is regulated as follows. Repressed by 20-hydroxyecdysone. Functionally, catalyzes the oxidation of uric acid to 5-hydroxyisourate, which is further processed to form (S)-allantoin. The protein is Uricase (Uro) of Drosophila pseudoobscura pseudoobscura (Fruit fly).